The chain runs to 451 residues: tRNA modification GTPase MnmE (451 aa).

Residues arginine 23, glutamate 80, and lysine 119 each contribute to the (6S)-5-formyl-5,6,7,8-tetrahydrofolate site. The region spanning 215–372 (GIKVVLAGQP…LRAALLKTAG (158 aa)) is the TrmE-type G domain. Asparagine 225 lines the K(+) pocket. GTP contacts are provided by residues 225-230 (NVGKSS), 244-250 (TDIPGTT), and 269-272 (DTAG). Serine 229 contacts Mg(2+). K(+)-binding residues include threonine 244, isoleucine 246, and threonine 249. Residue threonine 250 participates in Mg(2+) binding. Lysine 451 contacts (6S)-5-formyl-5,6,7,8-tetrahydrofolate.

The protein belongs to the TRAFAC class TrmE-Era-EngA-EngB-Septin-like GTPase superfamily. TrmE GTPase family. In terms of assembly, homodimer. Heterotetramer of two MnmE and two MnmG subunits. K(+) serves as cofactor.

The protein resides in the cytoplasm. Functionally, exhibits a very high intrinsic GTPase hydrolysis rate. Involved in the addition of a carboxymethylaminomethyl (cmnm) group at the wobble position (U34) of certain tRNAs, forming tRNA-cmnm(5)s(2)U34. This is tRNA modification GTPase MnmE from Nitrosomonas europaea (strain ATCC 19718 / CIP 103999 / KCTC 2705 / NBRC 14298).